The following is a 349-amino-acid chain: Soluble TNF receptor II (349 aa).

Positions 1–19 are cleaved as a signal peptide; the sequence is MRSVLYSYILFLSCIIING. 2 TNFR-Cys repeats span residues 31–65 and 67–108; these read KCKD…NTQC and PCGS…NRIC. 6 disulfides stabilise this stretch: C32–C43, C44–C57, C47–C65, C68–C83, C86–C100, and C90–C108. 5 N-linked (GlcNAc...) asparagine; by host glycosylation sites follow: N101, N190, N249, N277, and N313.

The protein belongs to the orthopoxvirus OPG002 family.

It is found in the secreted. Functionally, inhibits host immune defense by binding to host TNF and various chemokines in the extracellular space. Binds host CC chemokines (beta chemokines) and CXC chemokines (alpha chemokines). The chain is Soluble TNF receptor II (OPG002) from Monkeypox virus.